Consider the following 110-residue polypeptide: Holo-[acyl-carrier-protein] synthase (110 aa).

Residues Asp-8 and Glu-54 each contribute to the Mg(2+) site.

This sequence belongs to the P-Pant transferase superfamily. AcpS family. Mg(2+) is required as a cofactor.

It is found in the cytoplasm. The enzyme catalyses apo-[ACP] + CoA = holo-[ACP] + adenosine 3',5'-bisphosphate + H(+). Functionally, transfers the 4'-phosphopantetheine moiety from coenzyme A to a Ser of acyl-carrier-protein. This is Holo-[acyl-carrier-protein] synthase from Mycoplasma capricolum subsp. capricolum (strain California kid / ATCC 27343 / NCTC 10154).